The chain runs to 315 residues: Probable cell division protein WhiA (315 aa).

The segment at residues 280–313 (SLKELGDLLDPPLSKSGVAYRMRKLEESVKEILQ) is a DNA-binding region (H-T-H motif).

It belongs to the WhiA family.

In terms of biological role, involved in cell division and chromosome segregation. The protein is Probable cell division protein WhiA of Syntrophomonas wolfei subsp. wolfei (strain DSM 2245B / Goettingen).